Here is a 1218-residue protein sequence, read N- to C-terminus: Sodium bicarbonate cotransporter 3 (1218 aa).

2 disordered regions span residues 1-31 (MEAD…KTSS) and 53-99 (HVPF…SQRV). The Extracellular segment spans residues 1–612 (MEADGAGEQM…DFKDALSLQC (612 aa)). A phosphoserine mark is found at serine 57, serine 60, serine 89, and serine 155. A compositionally biased stretch (basic residues) spans 60–77 (SRRRHRHRGHKHHHRRRK). Residues 78–90 (DKDSDKEDGRESP) are compositionally biased toward basic and acidic residues. Asparagine 176 is a glycosylation site (N-linked (GlcNAc...) asparagine). 3 positions are modified to phosphoserine: serine 238, serine 247, and arginine 263. Residue asparagine 274 is glycosylated (N-linked (GlcNAc...) asparagine). Disordered regions lie at residues 294-350 (SRAG…DIPR), 364-412 (KGQE…ENST), and 536-577 (SIRI…HAGP). Over residues 308–318 (VPTPQNSPPSS) the composition is skewed to pro residues. A compositionally biased stretch (low complexity) spans 319 to 337 (PSLSRLTSRSSQQTQPQAP). A compositionally biased stretch (polar residues) spans 383-396 (SPQSAPGNLDSSKS). A phosphoserine mark is found at serine 386, serine 404, and serine 407. N-linked (GlcNAc...) asparagine glycosylation is present at asparagine 410. Phosphoserine is present on residues serine 411 and serine 560. Residues 567–576 (PPKEADHHAG) are compositionally biased toward basic and acidic residues. A helical membrane pass occupies residues 613–633 (LASILFLYCACMSPVITFGGL). Topologically, residues 634–641 (LGEATEGR) are cytoplasmic. Residues 642 to 662 (ISAIESLFGASLTGIAYSLFA) form a helical membrane-spanning segment. At 663–699 (GQPLTILGSTGPVLVFEKILFKFCRDYHLSYLSLRTS) the chain is on the extracellular side. Residues 700–720 (IGLWTSFLCIVLVATDASSLV) form a helical membrane-spanning segment. The Cytoplasmic portion of the chain corresponds to 721 to 729 (CYITRFTEE). The helical transmembrane segment at 730 to 750 (AFAALICIIFIYEALEKLFHL) threads the bilayer. Over 751–821 (GEIYAFNMHN…MFVGSACGPH (71 aa)) the chain is Extracellular. Cysteine 770 and cysteine 772 are disulfide-bonded. Asparagine 780, asparagine 790, and asparagine 800 each carry an N-linked (GlcNAc...) asparagine glycan. A disulfide bridge links cysteine 806 with cysteine 818. The helical transmembrane segment at 822–842 (GPYVPDVLFWCVVLFFTTFFL) threads the bilayer. Over 843–865 (SSFLKQFKTKRYFPTKVRSTISD) the chain is Cytoplasmic. A helical transmembrane segment spans residues 866–886 (FAVFLTIVIMVAIDYLVGIPS). Topologically, residues 887-912 (PKLHVPEKFEPTDPSRGWIISPLGDN) are extracellular. The chain crosses the membrane as a helical span at residues 913–933 (PWWTLLIAAVPALLCTILIFM). At 934-958 (DQQITAVIINRKEHKLKKGAGYHLD) the chain is on the cytoplasmic side. A helical transmembrane segment spans residues 959–979 (LLMVAVMLGVCSIMGLPWFVA). Topologically, residues 980–1015 (ATVLSISHVNSLKVESECSAPGEQPKFLGIREQRVT) are extracellular. Residues 1012 to 1135 (QRVTGLMIFI…MDLCFTKREL (124 aa)) are essential for cell membrane localization and transport activity. The chain crosses the membrane as a helical span at residues 1016 to 1036 (GLMIFILMGLSVFMTSVLKFI). The Cytoplasmic segment spans residues 1037–1038 (PM). The chain crosses the membrane as a helical span at residues 1039 to 1059 (PVLYGVFLYMGVSSLKGIQFF). The Extracellular portion of the chain corresponds to 1060–1096 (DRIKLFGMPAKHQPDLIYLRYVPLWKVHVFTVVQLTC). Phosphoserine occurs at positions 1067 and 1078. A helical transmembrane segment spans residues 1097–1117 (LVLLWVIKASAAAVVFPMMVL). The segment at 1118–1140 (ALVFVRKLMDLCFTKRELSWLDD) is essential for interaction with RACK1. Residues 1118–1218 (ALVFVRKLMD…KKYMDAETSL (101 aa)) are Cytoplasmic-facing. A CA2-binding region spans residues 1138-1140 (LDD). Positions 1148-1165 (KKEDDKKKKEKEEAERML) are enriched in basic and acidic residues. The disordered stretch occupies residues 1148 to 1172 (KKEDDKKKKEKEEAERMLQGDGDTV). Residue threonine 1171 is modified to Phosphothreonine. Phosphoserine is present on residues serine 1180, threonine 1188, isoleucine 1201, and serine 1217. Residues 1215–1218 (ETSL) carry the PDZ-binding motif.

This sequence belongs to the anion exchanger (TC 2.A.31) family. As to quaternary structure, interacts with USH1C. Forms a complex with ATP6V1B1 and NHERF1/EBP50. Interacts in a pH dependent-manner with CA2/carbonic anhydrase 2. Interacts with CFTR probably through NHERF1/EBP50. Interacts with RACK1. In terms of processing, undergoes lysosome-mediated degradation. Post-translationally, N-glycosylated. In terms of tissue distribution, expressed in aorta, ventricles, atrium, mesenteric artery, kidney, spleen, duodenum, jejunum, ileum, colon, lung, trachea, gastric fundus and pylorus, cerebrum, cerebellum, pancreas, liver, parotid gland, and epididymis. Expressed in the inner ear by cochlear outer and inner hair cells (at protein level). Highly expressed in testis and spleen. As to expression, specifically expressed in kidney. Specifically expressed in hippocampal neurons.

The protein localises to the basolateral cell membrane. Its subcellular location is the apical cell membrane. It is found in the cell projection. It localises to the stereocilium. The protein resides in the cell membrane. The enzyme catalyses hydrogencarbonate(in) + Na(+)(in) = hydrogencarbonate(out) + Na(+)(out). Insensitive to stilbene derivatives. Functionally, electroneutral sodium- and bicarbonate-dependent cotransporter with a Na(+):HCO3(-) 1:1 stoichiometry. Mediates the sodium-dependent bicarbonate transport important for pH recovery after acid load as well as for regulation of steady-state pH in the duodenum and vascular smooth muscle cells. Plays a key role in macrophage acidification, mediating bicarbonate import into the cytoplasm which is crucial for net acid extrusion and maintenance of cytoplasmic pH during phagocytosis. Provides cellular bicarbonate for de novo purine and pyrimidine synthesis and is a key mediator of de novo nucleotide synthesis downstream of mTORC1 signaling in proliferating cells. This is Sodium bicarbonate cotransporter 3 (Slc4a7) from Rattus norvegicus (Rat).